The sequence spans 109 residues: UPF0060 membrane protein PSPA7_1846 (109 aa).

Helical transmembrane passes span 5–25, 27–47, 59–79, and 84–104; these read LWFV…YLWL, LGKS…FALL, AYAA…AFVE, and LWSD…VLFG.

It belongs to the UPF0060 family.

Its subcellular location is the cell inner membrane. This Pseudomonas paraeruginosa (strain DSM 24068 / PA7) (Pseudomonas aeruginosa (strain PA7)) protein is UPF0060 membrane protein PSPA7_1846.